The following is a 298-amino-acid chain: 3'-5' exonuclease crn-4 (298 aa).

Residues 12 to 192 form the Exonuclease domain; the sequence is LILDFETTSD…DDCLNIATIL (181 aa). Asp-15, Glu-17, and Asp-184 together coordinate Mg(2+). Positions 210, 260, 263, and 270 each coordinate Zn(2+).

As to quaternary structure, homodimer (via C-terminus). Interacts with crn-5; interaction promotes the DNase activity of crn-4. Interacts with cps-6, crn-1 and cyn-13. It depends on Mg(2+) as a cofactor.

Its activity is regulated as follows. Exonuclease activity is inhibited in vitro by pontacyl violet 6R (PV6R), p-chloromercuriphenyl sulfonate (PCMPS), 5,5'-dithiobis(2-nitrobenzoic acid) (DTNB), aurintricarboxylic acid (ATA), 2-morpholin-4-ylethanesulfonate (MES), 4-[(4,6-dichloro-1,3,5-triazin-2-yl)amino]-2-(3-hydroxy-6-oxoxanthen-9-yl)benzoic acid (DR396) and fmoc-d-Cha-OH (FDCO). Interaction with ssRNA is reduced in vitro by PV6R. In terms of biological role, possesses 3'-&gt;5' exoribonuclease activity in digestion of DNA and RNA. Cleaves nucleic acid substrates with efficiencies in the following order: single-stranded RNA (ssRNA) &gt; double-stranded DNA (dsDNA) &gt; single-stranded DNA (ssDNA). Involved in apoptotic DNA degradation. The chain is 3'-5' exonuclease crn-4 (crn-4) from Caenorhabditis elegans.